The sequence spans 218 residues: Putative transposase InsD for insertion element IS2E (218 aa).

Residues 23-206 (KPAVPPSKRA…SPREYLRQRA (184 aa)) form the Integrase catalytic domain.

Involved in the transposition of the insertion sequence IS2. The protein is Putative transposase InsD for insertion element IS2E (insD8) of Escherichia coli (strain K12).